Consider the following 314-residue polypeptide: Glycerol-3-phosphate dehydrogenase [NAD(P)+] (314 aa).

Ser-14, Phe-15, Arg-35, and Lys-108 together coordinate NADPH. Sn-glycerol 3-phosphate is bound by residues Lys-108 and Gly-136. Ala-140 contributes to the NADPH binding site. Residues Lys-191, Asp-247, Ser-257, Arg-258, and Asn-259 each coordinate sn-glycerol 3-phosphate. Catalysis depends on Lys-191, which acts as the Proton acceptor. Arg-258 provides a ligand contact to NADPH. 2 residues coordinate NADPH: Leu-282 and Glu-284.

It belongs to the NAD-dependent glycerol-3-phosphate dehydrogenase family.

It localises to the cytoplasm. It catalyses the reaction sn-glycerol 3-phosphate + NAD(+) = dihydroxyacetone phosphate + NADH + H(+). It carries out the reaction sn-glycerol 3-phosphate + NADP(+) = dihydroxyacetone phosphate + NADPH + H(+). Its pathway is membrane lipid metabolism; glycerophospholipid metabolism. Functionally, catalyzes the reduction of the glycolytic intermediate dihydroxyacetone phosphate (DHAP) to sn-glycerol 3-phosphate (G3P), the key precursor for phospholipid synthesis. In Rickettsia bellii (strain OSU 85-389), this protein is Glycerol-3-phosphate dehydrogenase [NAD(P)+].